Here is a 347-residue protein sequence, read N- to C-terminus: 3-methyl-2-oxobutanoate hydroxymethyltransferase 1, mitochondrial (347 aa).

The transit peptide at 1–48 directs the protein to the mitochondrion; sequence MASSLTRNCSRFSKAISVRFMSNLPENTVYGGPKPQNPNQRVTLTHLR. Aspartate 83 and aspartate 122 together coordinate Mg(2+). Residues 83–84, aspartate 122, and lysine 152 each bind 3-methyl-2-oxobutanoate; that span reads DS. Glutamate 154 contributes to the Mg(2+) binding site. Glutamate 222 acts as the Proton acceptor in catalysis.

This sequence belongs to the PanB family. Mg(2+) serves as cofactor.

It is found in the mitochondrion. The enzyme catalyses 3-methyl-2-oxobutanoate + (6R)-5,10-methylene-5,6,7,8-tetrahydrofolate + H2O = 2-dehydropantoate + (6S)-5,6,7,8-tetrahydrofolate. It participates in cofactor biosynthesis; (R)-pantothenate biosynthesis; (R)-pantoate from 3-methyl-2-oxobutanoate: step 1/2. In terms of biological role, catalyzes the reversible reaction in which hydroxymethyl group from 5,10-methylenetetrahydrofolate is transferred onto alpha-ketoisovalerate to form ketopantoate. The protein is 3-methyl-2-oxobutanoate hydroxymethyltransferase 1, mitochondrial (KPHMT1) of Arabidopsis thaliana (Mouse-ear cress).